The primary structure comprises 269 residues: 5'-methylthioadenosine/S-adenosylhomocysteine nucleosidase (269 aa).

Glu12 acts as the Proton acceptor in catalysis. Residues Gly77, Val174, and 194–195 (ME) each bind substrate. Residue Asp218 is the Proton donor of the active site.

The protein belongs to the PNP/UDP phosphorylase family. MtnN subfamily.

The enzyme catalyses S-adenosyl-L-homocysteine + H2O = S-(5-deoxy-D-ribos-5-yl)-L-homocysteine + adenine. It carries out the reaction S-methyl-5'-thioadenosine + H2O = 5-(methylsulfanyl)-D-ribose + adenine. The catalysed reaction is 5'-deoxyadenosine + H2O = 5-deoxy-D-ribose + adenine. It functions in the pathway amino-acid biosynthesis; L-methionine biosynthesis via salvage pathway; S-methyl-5-thio-alpha-D-ribose 1-phosphate from S-methyl-5'-thioadenosine (hydrolase route): step 1/2. Its function is as follows. Catalyzes the irreversible cleavage of the glycosidic bond in both 5'-methylthioadenosine (MTA) and S-adenosylhomocysteine (SAH/AdoHcy) to adenine and the corresponding thioribose, 5'-methylthioribose and S-ribosylhomocysteine, respectively. Also cleaves 5'-deoxyadenosine, a toxic by-product of radical S-adenosylmethionine (SAM) enzymes, into 5-deoxyribose and adenine. This Treponema pallidum (strain Nichols) protein is 5'-methylthioadenosine/S-adenosylhomocysteine nucleosidase (mtnN).